The chain runs to 296 residues: tRNA uridine(34) hydroxylase (296 aa).

The 95-residue stretch at 132-226 (AGRPVVMLDT…YFEEVGGAHY (95 aa)) folds into the Rhodanese domain. Cys-186 functions as the Cysteine persulfide intermediate in the catalytic mechanism.

This sequence belongs to the TrhO family.

The enzyme catalyses uridine(34) in tRNA + AH2 + O2 = 5-hydroxyuridine(34) in tRNA + A + H2O. Functionally, catalyzes oxygen-dependent 5-hydroxyuridine (ho5U) modification at position 34 in tRNAs. This Burkholderia thailandensis (strain ATCC 700388 / DSM 13276 / CCUG 48851 / CIP 106301 / E264) protein is tRNA uridine(34) hydroxylase.